Reading from the N-terminus, the 330-residue chain is Phytanoyl-CoA hydroxylase-interacting protein (330 aa).

One can recognise a Fibronectin type-III domain in the interval 6–115 (TPHSIEINNI…ETVEFCTGDY (110 aa)). N-linked (GlcNAc...) asparagine glycans are attached at residues asparagine 14 and asparagine 325.

Belongs to the PHYHIP family. In terms of assembly, interacts with PHYH and ADGRB1. In terms of tissue distribution, highly expressed in the brain.

Its interaction with PHYH suggests a role in the development of the central system. The polypeptide is Phytanoyl-CoA hydroxylase-interacting protein (PHYHIP) (Homo sapiens (Human)).